The following is a 215-amino-acid chain: Phosphoserine phosphatase (215 aa).

Catalysis depends on Asp-11, which acts as the Nucleophile. 2 residues coordinate Mg(2+): Asp-11 and Asp-13. Asp-13 functions as the Proton donor in the catalytic mechanism. Residues Glu-20, Arg-56, 99-100 (SG), and Lys-144 each bind substrate. Mg(2+) is bound at residue Asp-167. Asn-170 contacts substrate.

This sequence belongs to the HAD-like hydrolase superfamily. SerB family. Mg(2+) is required as a cofactor.

It catalyses the reaction O-phospho-L-serine + H2O = L-serine + phosphate. The catalysed reaction is O-phospho-D-serine + H2O = D-serine + phosphate. It participates in amino-acid biosynthesis; L-serine biosynthesis; L-serine from 3-phospho-D-glycerate: step 3/3. In Streptococcus thermophilus (strain ATCC BAA-250 / LMG 18311), this protein is Phosphoserine phosphatase.